The primary structure comprises 151 residues: Differentiation-associated protein 2 (151 aa).

The signal sequence occupies residues 1-22; that stretch reads MKQIIRLITTLLLLSLIGITCA.

The protein resides in the endoplasmic reticulum. Its subcellular location is the vacuole. Has an essential role in the initiation of differentiation. Also required for cAMP signaling. This Dictyostelium discoideum (Social amoeba) protein is Differentiation-associated protein 2 (dia2).